The chain runs to 105 residues: Structural protein 11 (105 aa).

The stretch at 59–97 forms a coiled coil; sequence NLIKSIQRARDVSEGEARELKDDMVTELEKAETKEERRD.

The protein resides in the virion. This is Structural protein 11 from His1 virus (isolate Australia/Victoria) (His1V).